Consider the following 335-residue polypeptide: DNA-directed RNA polymerase subunit alpha (335 aa).

Positions 1–233 are alpha N-terminal domain (alpha-NTD); it reads MTRTANEFLT…QQIAIFVDLQ (233 aa). The alpha C-terminal domain (alpha-CTD) stretch occupies residues 247–335; the sequence is VDPILLRPVD…MDDRFAYRSR (89 aa).

This sequence belongs to the RNA polymerase alpha chain family. In terms of assembly, homodimer. The RNAP catalytic core consists of 2 alpha, 1 beta, 1 beta' and 1 omega subunit. When a sigma factor is associated with the core the holoenzyme is formed, which can initiate transcription.

The catalysed reaction is RNA(n) + a ribonucleoside 5'-triphosphate = RNA(n+1) + diphosphate. DNA-dependent RNA polymerase catalyzes the transcription of DNA into RNA using the four ribonucleoside triphosphates as substrates. The protein is DNA-directed RNA polymerase subunit alpha of Acinetobacter baumannii (strain AB307-0294).